A 213-amino-acid polypeptide reads, in one-letter code: Putative manganese efflux pump MntP (213 aa).

6 helical membrane passes run 3–23 (ILSIVLTGFGLAMDAFAVSVA), 36–56 (ALKVALFFGGFQALMPLIGWG), 67–87 (AFDHWIAFILLSFIGGKMIFE), 130–150 (LAIATSIDALAVGVSFAFLGI), 152–172 (IVQTIIIIGIITFVLCFLGVI), and 187–207 (IVGGVILILIGINILLEHTGI).

It belongs to the MntP (TC 9.B.29) family.

The protein localises to the cell membrane. In terms of biological role, probably functions as a manganese efflux pump. This is Putative manganese efflux pump MntP from Clostridium perfringens (strain 13 / Type A).